The primary structure comprises 124 residues: MANVFDNSSYRDMLKMVFVIRDDLKMTKGEIVSQCCHGAISAYEKSKKYSPDYLKRWLKNGQVKETVKVDNENEMMDIRENATAIGVNYYIVQNDKRQKCNTVLVIGPAPNYMFESLTRSLKPL.

This sequence belongs to the PTH2 family.

The enzyme catalyses an N-acyl-L-alpha-aminoacyl-tRNA + H2O = an N-acyl-L-amino acid + a tRNA + H(+). The polypeptide is Putative peptidyl-tRNA hydrolase (Fowlpox virus (strain NVSL) (FPV)).